We begin with the raw amino-acid sequence, 99 residues long: Nucleoid-associated protein SUB1611 (99 aa).

This sequence belongs to the YbaB/EbfC family. As to quaternary structure, homodimer.

Its subcellular location is the cytoplasm. The protein localises to the nucleoid. Functionally, binds to DNA and alters its conformation. May be involved in regulation of gene expression, nucleoid organization and DNA protection. This Streptococcus uberis (strain ATCC BAA-854 / 0140J) protein is Nucleoid-associated protein SUB1611.